The primary structure comprises 396 residues: Protein RepA (396 aa).

2 disordered regions span residues 141–170 (SKELGKTGGRPRKKDSEEEPEKKPEEVTKK) and 356–396 (NQYK…LPTT). The segment covering 154-168 (KDSEEEPEKKPEEVT) has biased composition (basic and acidic residues).

The sequence is that of Protein RepA (repA) from Bacillus subtilis.